A 3678-amino-acid chain; its full sequence is Dystrophin (3678 aa).

An actin-binding region spans residues 1–240 (MLWWEEVEDC…YITSLFQVLP (240 aa)). 2 Calponin-homology (CH) domains span residues 15–119 (DVQK…LHWQ) and 134–240 (TNSE…QVLP). An ANK2- and ANK-3 binding region spans residues 63 to 72 (PKEKGSTRVH). The segment at 313 to 333 (DSTQSPYPSQHLEAPRDKSLD) is disordered. Spectrin repeat units follow at residues 341–449 (VNLD…KLHK), 450–558 (VLMD…VLQD), 561–669 (LKWQ…QISQ), 721–830 (ELRK…WLEY), 832–936 (TNII…ELQT), 945–1047 (RYQE…KLEE), 1050–1156 (NKLR…ALKA), 1159–1265 (DKTV…TLEE), 1268–1369 (ACWH…LLEQ), 1370–1465 (SIQS…LFQK), 1470–1570 (EQRL…QLEK), 1573–1678 (KLSR…LLLE), 1681–1780 (KHME…KASI), 1781–1876 (PLKE…KALE), 1879–1981 (HQWY…TLHE), 1994–2103 (DVSY…RFDR), 2106–2210 (EKWR…RIEE), 2213–2318 (NVLS…ELEV), 2319–2416 (HLKD…LRTK), 2468–2570 (FNRA…QLNE), 2573–2679 (KDST…ALEE), 2682–2795 (RLLQ…HLEA), 2801–2923 (KRLH…RKID), and 2928–3033 (RLQE…QLHE). The interaction with SYNM stretch occupies residues 1417–1915 (SDLTSHEISL…PEPRDERKLK (499 aa)). The region spanning 3048–3081 (TSVQGPWERAISPNKVPYYINHETQTTCWDHPKM) is the WW domain. An interaction with SYNM region spans residues 3051-3401 (QGPWERAISP…TVLEGDNMET (351 aa)). The segment at 3301-3357 (KHQAKCNICKECPIIGFRYRSLKHFNYDICQSCFFSGRVAKGHKMHYPMVEYCTPTT) adopts a ZZ-type; degenerate zinc-finger fold. Zn(2+) contacts are provided by Cys-3306, Cys-3309, Cys-3330, and Cys-3333. A binds to SNTB1 region spans residues 3459–3511 (DDEHLLIQHYCQSLNQDSPLSQPRSPAQILISLESEERGELERILADLEEENR). Phosphoserine occurs at positions 3476, 3483, and 3493. Disordered regions lie at residues 3521-3547 (KQQHEHKGLSPLPSPPEMMPTSPQSPR) and 3596-3678 (EAKV…EDTM). Composition is skewed to polar residues over residues 3600 to 3619 (NGTTVSSPSTSLQRSDSSQP) and 3655 to 3665 (QLNNSFPSSRG). Residues Ser-3605, Ser-3606, Ser-3610, Ser-3616, Ser-3617, and Ser-3659 each carry the phosphoserine modification.

As to quaternary structure, interacts with SYNM. Interacts with the syntrophins SNTG1 and SNTG2. Interacts with KRT19. Component of the dystrophin-associated glycoprotein complex which is composed of three subcomplexes: a cytoplasmic complex comprised of DMD (or UTRN), DTNA and a number of syntrophins, such as SNTB1, SNTB2, SNTG1 and SNTG2, the transmembrane dystroglycan complex, and the sarcoglycan-sarcospan complex. Interacts with DAG1 (betaDAG1) with DMD; the interaction is inhibited by phosphorylation on the PPXY motif of DAG1. Interacts with SYNM; SNTA1 and SNTB1. Interacts with CMYA5. Directly interacts with ANK2 and ANK3; these interactions do not interfere with betaDAG1-binding and are necessary for proper localization in muscle cells. Identified in a dystroglycan complex that contains at least PRX, DRP2, UTRN, DMD and DAG1. Interacts with DTNB. Interacts with PGM5; the interaction is direct. Interacts with NOS1; localizes NOS1 to sarcolemma in muscle cells. As to expression, detected in quadriceps muscle and in sciatic nerve (at protein level). Expressed in the sarcolemma of the soleus muscle (at protein level). Differentially expressed during skeletal muscle, heart, and brain development. Also expressed in retina.

It localises to the cell membrane. Its subcellular location is the sarcolemma. The protein resides in the cytoplasm. It is found in the cytoskeleton. The protein localises to the postsynaptic cell membrane. Its function is as follows. Anchors the extracellular matrix to the cytoskeleton via F-actin. Ligand for dystroglycan. Component of the dystrophin-associated glycoprotein complex which accumulates at the neuromuscular junction (NMJ) and at a variety of synapses in the peripheral and central nervous systems and has a structural function in stabilizing the sarcolemma. Also implicated in signaling events and synaptic transmission. In Mus musculus (Mouse), this protein is Dystrophin (Dmd).